The sequence spans 717 residues: Asp/Glu-specific dipeptidyl-peptidase (717 aa).

The first 21 residues, 1 to 21 (MNKRFFPTLLLAFVCSTLAYA), serve as a signal peptide directing secretion. Residues His85, Asp226, and Ser652 each act as charge relay system in the active site.

The protein belongs to the peptidase S46 family.

It is found in the secreted. The protein resides in the cell surface. Enzyme activity is completely blocked by diisopropyl-fluorophosphates, moderately by phenylmethylsulfonyl fluoride (PMSF) and 4-(2-methyl)benzenesulfonyl fluoride, and slightly by pepstatin in vitro. Its function is as follows. Catalyzes the removal of dipeptides from the N-terminus of oligopeptides. Shows a strict specificity for acidic residues (Asp or Glu) in the P1 position, and has a hydrophobic residue preference at the P2 position. Is likely involved in amino acid metabolism and bacterial growth/survival of asaccharolytic P.endodontalis, that utilizes amino acids from extracellular proteinaceous nutrients as energy and carbon sources. This chain is Asp/Glu-specific dipeptidyl-peptidase (dpp11), found in Porphyromonas endodontalis (strain ATCC 35406 / DSM 24491 / JCM 8526 / CCUG 16442 / BCRC 14492 / NCTC 13058 / HG 370) (Bacteroides endodontalis).